Consider the following 467-residue polypeptide: Chromosomal replication initiator protein DnaA (467 aa).

The segment at 1–74 (MSADVWSQGC…ESVLSDLAGK (74 aa)) is domain I, interacts with DnaA modulators. The tract at residues 74 to 130 (KPVRLDLQLAAREAPPRPSSDAPRSNGHPQAAGQWLGAPSSSNAGAYTQASAPTPTH) is domain II. A disordered region spans residues 85–127 (REAPPRPSSDAPRSNGHPQAAGQWLGAPSSSNAGAYTQASAPT). Over residues 112–127 (PSSSNAGAYTQASAPT) the composition is skewed to polar residues. A domain III, AAA+ region region spans residues 131–347 (RLNTALTFDT…GALRKVLAYA (217 aa)). 4 residues coordinate ATP: glycine 175, glycine 177, lysine 178, and threonine 179. Residues 348 to 467 (RFSQKDINIA…LHVLEQTLKG (120 aa)) form a domain IV, binds dsDNA region.

It belongs to the DnaA family. In terms of assembly, oligomerizes as a right-handed, spiral filament on DNA at oriC.

The protein resides in the cytoplasm. Plays an essential role in the initiation and regulation of chromosomal replication. ATP-DnaA binds to the origin of replication (oriC) to initiate formation of the DNA replication initiation complex once per cell cycle. Binds the DnaA box (a 9 base pair repeat at the origin) and separates the double-stranded (ds)DNA. Forms a right-handed helical filament on oriC DNA; dsDNA binds to the exterior of the filament while single-stranded (ss)DNA is stabiized in the filament's interior. The ATP-DnaA-oriC complex binds and stabilizes one strand of the AT-rich DNA unwinding element (DUE), permitting loading of DNA polymerase. After initiation quickly degrades to an ADP-DnaA complex that is not apt for DNA replication. Binds acidic phospholipids. In Methylibium petroleiphilum (strain ATCC BAA-1232 / LMG 22953 / PM1), this protein is Chromosomal replication initiator protein DnaA.